The following is a 1907-amino-acid chain: Receptor-type tyrosine-protein phosphatase S (1907 aa).

The first 29 residues, Met1 to Ala29, serve as a signal peptide directing secretion. The Extracellular segment spans residues Glu30–Gly1257. Ig-like C2-type domains follow at residues Pro33 to Thr123, Pro135 to Tyr224, and Pro232 to Thr314. 2 cysteine pairs are disulfide-bonded: Cys54–Cys107 and Cys156–Cys207. An important for binding to glycosaminoglycan chains region spans residues Lys68–Lys72. Asn250 and Asn295 each carry an N-linked (GlcNAc...) asparagine glycan. The cysteines at positions 253 and 298 are disulfide-linked. Fibronectin type-III domains follow at residues Ala321–Gln411, Ala416–Gly510, Gln514–Ala603, Pro608–Asp705, Pro710–Ala809, Val810–Gly906, Phe907–Asp1008, and Ser1011–Asn1095. Residues Pro691–Val700 show a composition bias toward low complexity. Residues Pro691–Pro711 are disordered. N-linked (GlcNAc...) asparagine glycosylation occurs at Asn720. Asn916 is a glycosylation site (N-linked (GlcNAc...) asparagine). The helical transmembrane segment at Leu1258–Ile1278 threads the bilayer. Topologically, residues Leu1279–Thr1907 are cytoplasmic. The span at Asp1286 to Thr1296 shows a compositional bias: basic and acidic residues. A disordered region spans residues Asp1286 to Pro1313. 2 Tyrosine-protein phosphatase domains span residues Leu1352–Ala1607 and Met1639–Tyr1898. Substrate-binding positions include Asp1516, Cys1548 to Arg1554, and Gln1592. Residue Cys1548 is the Phosphocysteine intermediate of the active site. The active-site Phosphocysteine intermediate is Cys1839.

Belongs to the protein-tyrosine phosphatase family. Receptor class 2A subfamily. As to quaternary structure, binding to large heparan sulfate proteoglycan structures promotes oligomerization. Binding to chondroitin sulfate proteoglycan does not lead to oligomerization. Interacts (via Ig-like domains) with NTRK3. Interacts (via Ig-like domains) with NTRK1, but does not form detectable complexes with NTRK2. Interacts with PPFIA1, PPFIA2 and PPFIA3. Post-translationally, a cleavage occurs, separating the extracellular domain from the transmembrane segment. This process called 'ectodomain shedding' is thought to be involved in receptor desensitization, signal transduction and/or membrane localization. As to expression, detected in brain cortex, cerebellum and thoracic spinal cord (at protein level). Detected in motor cortex and white matter of the spinal cord, but not in spinal cord gray matter. Isoform 1 and isoform 6 are predominantly expressed in the brain (cerebrum and cerebellum) and to a lesser extent in the heart and skeletal muscle. Also found in neuronal-derived cell lines. Detected in the ganglion cell layer of the retina and in glial cells along the optic nerve. Detected in bone marrow and spleen plasmacytoid dendritic cells.

It localises to the cell membrane. Its subcellular location is the cell projection. It is found in the axon. The protein localises to the perikaryon. The protein resides in the cytoplasmic vesicle. It localises to the secretory vesicle. Its subcellular location is the synaptic vesicle membrane. It is found in the synapse. The protein localises to the synaptosome. The protein resides in the postsynaptic density. It localises to the neuron projection. Its subcellular location is the growth cone. The catalysed reaction is O-phospho-L-tyrosyl-[protein] + H2O = L-tyrosyl-[protein] + phosphate. Functionally, cell surface receptor that binds to glycosaminoglycans, including chondroitin sulfate proteoglycans and heparan sulfate proteoglycans. Binding to chondroitin sulfate and heparan sulfate proteoglycans has opposite effects on PTPRS oligomerization and regulation of neurite outgrowth. Contributes to the inhibition of neurite and axonal outgrowth by chondroitin sulfate proteoglycans, also after nerve transection. Plays a role in stimulating neurite outgrowth in response to the heparan sulfate proteoglycan GPC2. Required for normal brain development, especially for normal development of the pituitary gland and the olfactory bulb. Functions as a tyrosine phosphatase. Mediates dephosphorylation of NTRK1, NTRK2 and NTRK3. Plays a role in down-regulation of signaling cascades that lead to the activation of Akt and MAP kinases. Down-regulates TLR9-mediated activation of NF-kappa-B, as well as production of TNF, interferon alpha and interferon beta. In Mus musculus (Mouse), this protein is Receptor-type tyrosine-protein phosphatase S (Ptprs).